The sequence spans 208 residues: Small ribosomal subunit protein uS4 (208 aa).

Residues 98–161 (LRLDNVVFRL…RKVVRISEAL (64 aa)) enclose the S4 RNA-binding domain.

The protein belongs to the universal ribosomal protein uS4 family. In terms of assembly, part of the 30S ribosomal subunit. Contacts protein S5. The interaction surface between S4 and S5 is involved in control of translational fidelity.

Its function is as follows. One of the primary rRNA binding proteins, it binds directly to 16S rRNA where it nucleates assembly of the body of the 30S subunit. In terms of biological role, with S5 and S12 plays an important role in translational accuracy. The polypeptide is Small ribosomal subunit protein uS4 (Anaeromyxobacter sp. (strain Fw109-5)).